Consider the following 499-residue polypeptide: Anaerobic nitric oxide reductase flavorubredoxin (499 aa).

A zinc metallo-hydrolase region spans residues 30–210; sequence TKGTSYNSYL…PFSALVTAKI (181 aa). Residues H79, E81, D83, H147, D166, and H227 each coordinate Fe cation. A Flavodoxin-like domain is found at 254-393; sequence ITLFYDSMSN…LCREHGQFIA (140 aa). Residues 260–264 and 342–369 contribute to the FMN site; these read SMSNN and AFGS…ETAV. The 52-residue stretch at 447–498 folds into the Rubredoxin-like domain; that stretch reads KQCMLCTVCNWVYDPEIGEPNQGVEPNTAWIDVPDYFLCPECNLGKDVFVEV. Fe cation is bound by residues C452, C455, C485, and C488.

In the N-terminal section; belongs to the zinc metallo-hydrolase group 3 family. In terms of assembly, homotetramer. It depends on Fe cation as a cofactor. FMN serves as cofactor.

The protein resides in the cytoplasm. The protein operates within nitrogen metabolism; nitric oxide reduction. Functionally, anaerobic nitric oxide reductase; uses NADH to detoxify nitric oxide (NO), protecting several 4Fe-4S NO-sensitive enzymes. Has at least 2 reductase partners, only one of which (NorW, flavorubredoxin reductase) has been identified. NO probably binds to the di-iron center; electrons enter from the NorW at rubredoxin and are transferred sequentially to the FMN center and the di-iron center. Also able to function as an aerobic oxygen reductase. The protein is Anaerobic nitric oxide reductase flavorubredoxin of Aliivibrio salmonicida (strain LFI1238) (Vibrio salmonicida (strain LFI1238)).